A 635-amino-acid polypeptide reads, in one-letter code: Dihydrolipoyllysine-residue acetyltransferase component of pyruvate dehydrogenase complex, mitochondrial (635 aa).

One can recognise a Lipoyl-binding 1 domain in the interval 83–160 (GKEITMPALS…EINKPIAIIV (78 aa)). Residue lysine 124 is modified to N6-lipoyllysine. A disordered region spans residues 171–204 (KNYKPSSQASSTPVQEEAPKPKQEAPKKSTKTYP). The span at 174–184 (KPSSQASSTPV) shows a compositional bias: polar residues. Basic and acidic residues predominate over residues 187–197 (EAPKPKQEAPK). A Lipoyl-binding 2 domain is found at 206–283 (HKVVGMPALS…QINQPVCIIV (78 aa)). At lysine 247 the chain carries N6-lipoyllysine. Positions 295–338 (YSVEEQSSSSSSSSQESTPSSSSSSSQESTPSQSSSQQTTRKSG) are disordered. Residues 298–334 (EEQSSSSSSSSQESTPSSSSSSSQESTPSQSSSQQTT) are compositionally biased toward low complexity. Residues 342–379 (FATPAARFEASSKGYDLSAINGTGPNNRILKADVLEFV) enclose the Peripheral subunit-binding (PSBD) domain. Residues 382 to 413 (KQEVAQQQQQQTTTTTKKPTTPTSSGEFTDIP) form a disordered region. Residues 387–404 (QQQQQQTTTTTKKPTTPT) are compositionally biased toward low complexity. The catalytic stretch occupies residues 403–635 (PTSSGEFTDI…YVENPIKLIL (233 aa)).

It belongs to the 2-oxoacid dehydrogenase family. 20 to 30 alpha(2)-beta(2) tetramers of E1 + 6 homodimers of E3 + 60 copies of E2. (R)-lipoate serves as cofactor.

The protein localises to the mitochondrion matrix. The enzyme catalyses N(6)-[(R)-dihydrolipoyl]-L-lysyl-[protein] + acetyl-CoA = N(6)-[(R)-S(8)-acetyldihydrolipoyl]-L-lysyl-[protein] + CoA. In terms of biological role, the pyruvate dehydrogenase complex catalyzes the overall conversion of pyruvate to acetyl-CoA and CO(2). It contains multiple copies of three enzymatic components: pyruvate dehydrogenase (E1), dihydrolipoamide acetyltransferase (E2) and lipoamide dehydrogenase (E3). The sequence is that of Dihydrolipoyllysine-residue acetyltransferase component of pyruvate dehydrogenase complex, mitochondrial (pdhC) from Dictyostelium discoideum (Social amoeba).